The sequence spans 209 residues: Small ribosomal subunit protein uS5 (209 aa).

Residues 48–111 (LEDEVLDINM…DAAKLNITYI (64 aa)) form the S5 DRBM domain.

Belongs to the universal ribosomal protein uS5 family. As to quaternary structure, part of the 30S ribosomal subunit. Contacts protein S4.

With S4 and S12 plays an important role in translational accuracy. This Methanosarcina mazei (strain ATCC BAA-159 / DSM 3647 / Goe1 / Go1 / JCM 11833 / OCM 88) (Methanosarcina frisia) protein is Small ribosomal subunit protein uS5.